A 102-amino-acid chain; its full sequence is Small ribosomal subunit protein uS10 (102 aa).

It belongs to the universal ribosomal protein uS10 family. In terms of assembly, part of the 30S ribosomal subunit.

In terms of biological role, involved in the binding of tRNA to the ribosomes. This is Small ribosomal subunit protein uS10 from Mycoplasma mycoides subsp. mycoides SC (strain CCUG 32753 / NCTC 10114 / PG1).